A 406-amino-acid chain; its full sequence is 2,3-bisphosphoglycerate-independent phosphoglycerate mutase (406 aa).

Basic and acidic residues predominate over residues isoleucine 156–glycine 165. The segment at isoleucine 156–serine 177 is disordered.

It belongs to the BPG-independent phosphoglycerate mutase family. A-PGAM subfamily.

It catalyses the reaction (2R)-2-phosphoglycerate = (2R)-3-phosphoglycerate. Its pathway is carbohydrate degradation; glycolysis; pyruvate from D-glyceraldehyde 3-phosphate: step 3/5. Functionally, catalyzes the interconversion of 2-phosphoglycerate and 3-phosphoglycerate. In Methanococcus aeolicus (strain ATCC BAA-1280 / DSM 17508 / OCM 812 / Nankai-3), this protein is 2,3-bisphosphoglycerate-independent phosphoglycerate mutase.